Consider the following 188-residue polypeptide: Elongation factor P (188 aa).

An N6-(3,6-diaminohexanoyl)-5-hydroxylysine modification is found at Lys-34.

It belongs to the elongation factor P family. In terms of processing, is beta-lysylated on the epsilon-amino group of Lys-34 by the combined action of EpmA and EpmB, and then hydroxylated on the C5 position of the same residue by EpmC. Lysylation is critical for the stimulatory effect of EF-P on peptide-bond formation. The lysylation moiety would extend toward the peptidyltransferase center and stabilize the terminal 3-CCA end of the tRNA. The hydroxylation of the C5 position on Lys-34 would allow additional potential stabilizing hydrogen-bond interactions with the P-tRNA.

The protein resides in the cytoplasm. Its pathway is protein biosynthesis; polypeptide chain elongation. Involved in peptide bond synthesis. Alleviates ribosome stalling that occurs when 3 or more consecutive Pro residues or the sequence PPG is present in a protein, possibly by augmenting the peptidyl transferase activity of the ribosome. Modification of Lys-34 is required for alleviation. The sequence is that of Elongation factor P from Shigella boydii serotype 18 (strain CDC 3083-94 / BS512).